A 349-amino-acid polypeptide reads, in one-letter code: Ion-translocating oxidoreductase complex subunit D (349 aa).

Transmembrane regions (helical) follow at residues 36–56 (CAFF…VALS), 77–99 (SAML…WMIV), and 124–144 (AMAA…SWIA). Thr185 carries the post-translational modification FMN phosphoryl threonine. 5 helical membrane-spanning segments follow: residues 212–232 (GTGV…LVLL), 239–259 (WHIS…GFLL), 265–285 (ASPL…FIAT), 291–311 (ATSP…VYII), and 315–335 (GGYP…APFI).

This sequence belongs to the NqrB/RnfD family. The complex is composed of six subunits: RnfA, RnfB, RnfC, RnfD, RnfE and RnfG. The cofactor is FMN.

Its subcellular location is the cell inner membrane. Part of a membrane-bound complex that couples electron transfer with translocation of ions across the membrane. In Shewanella sp. (strain ANA-3), this protein is Ion-translocating oxidoreductase complex subunit D.